A 694-amino-acid polypeptide reads, in one-letter code: Cyclic nucleotide-gated channel alpha-3 (694 aa).

2 stretches are compositionally biased toward polar residues: residues 1-11 and 112-123; these read MAKINTQYSHP and SQESNAQANVGS. 2 disordered regions span residues 1–24 and 109–152; these read MAKI…SDRD and EVSS…EEKK. At 1–170 the chain is on the cytoplasmic side; sequence MAKINTQYSH…VDPSSNLYYR (170 aa). Residues 171–192 traverse the membrane as a helical segment; it reads WLTAIALPVFYNWYLLICRACF. Topologically, residues 193–198 are extracellular; the sequence is DELQSE. A helical membrane pass occupies residues 199–219; sequence YLMLWLVLDYSADVLYVLDVL. The Cytoplasmic segment spans residues 220–246; that stretch reads VRARTGFLEQGLMVSDTNRLWQHYKTT. The helical transmembrane segment at 247-266 threads the bilayer; the sequence is TQFKLDVLSLVPTDLAYLKV. Residues 267–270 are Extracellular-facing; that stretch reads GTNY. A helical transmembrane segment spans residues 271 to 288; sequence PEVRFNRLLKFSRLFEFF. At 289 to 298 the chain is on the cytoplasmic side; sequence DRTETRTNYP. The interval 298–406 is ion conduction pathway; the sequence is PNMFRIGNLV…GNVGSMISNM (109 aa). The chain crosses the membrane as a helical span at residues 299-321; sequence NMFRIGNLVLYILIIIHWNACIY. Residues 322–347 are Extracellular-facing; sequence FAISKFIGFGTDSWVYPNISIPEHGR. N-linked (GalNAc...) asparagine glycosylation is present at asparagine 339. A run of 2 helical transmembrane segments spans residues 348–378 and 379–403; these read LSRK…DEEY and LFVV…GSMI. Positions 365–368 are selectivity filter; it reads TIGE. The Cytoplasmic segment spans residues 404–694; the sequence is SNMNASRAEF…DATKTEDKQQ (291 aa). The interval 408–485 is C-linker; the sequence is ASRAEFQAKI…TLKKVRIFQD (78 aa). Residues 488–608 are cyclic nucleotide-binding domain; sequence AGLLVELVLK…EEKGRQILMK (121 aa). 3',5'-cyclic GMP contacts are provided by glycine 548, glutamate 549, serine 551, arginine 564, threonine 565, and aspartate 609. Residues 626–669 adopt a coiled-coil conformation; the sequence is LEEKVEQLGSSLDTLQTRFARLLAEYNATQMKMKQRLSQLESQV. Residues 662-694 are disordered; it reads LSQLESQVKGGGDKPLADGEVPGDATKTEDKQQ.

The protein belongs to the cyclic nucleotide-gated cation channel (TC 1.A.1.5) family. CNGA3 subfamily. In terms of assembly, forms heterotetrameric channels composed of CNGA3 and CNGB3 subunits with 3:1 stoichiometry. Prominently expressed in retina.

It localises to the cell membrane. The enzyme catalyses Ca(2+)(in) = Ca(2+)(out). The catalysed reaction is Na(+)(in) = Na(+)(out). It carries out the reaction K(+)(in) = K(+)(out). It catalyses the reaction NH4(+)(in) = NH4(+)(out). The enzyme catalyses Rb(+)(in) = Rb(+)(out). The catalysed reaction is Li(+)(in) = Li(+)(out). It carries out the reaction Cs(+)(in) = Cs(+)(out). Inhibited by L-cis-diltiazem. In terms of biological role, pore-forming subunit of the cone cyclic nucleotide-gated channel. Mediates cone photoresponses at bright light converting transient changes in intracellular cGMP levels into electrical signals. In the dark, cGMP levels are high and keep the channel open enabling a steady inward current carried by Na(+) and Ca(2+) ions that leads to membrane depolarization and neurotransmitter release from synaptic terminals. Upon photon absorption cGMP levels decline leading to channel closure and membrane hyperpolarization that ultimately slows neurotransmitter release and signals the presence of light, the end point of the phototransduction cascade. Pore-forming subunit of the gustatory cyclic nucleotide-gated channel. In the taste buds, may sense oral extracellular pH and conduct ion currents that modulate the excitability of taste cells. Conducts cGMP- and cAMP-gated ion currents, with permeability for monovalent and divalent cations. In Homo sapiens (Human), this protein is Cyclic nucleotide-gated channel alpha-3.